The primary structure comprises 213 residues: Pyrrolidone-carboxylate peptidase (213 aa).

Catalysis depends on residues Glu-78, Cys-141, and His-165.

This sequence belongs to the peptidase C15 family. Homotetramer.

The protein resides in the cytoplasm. It catalyses the reaction Release of an N-terminal pyroglutamyl group from a polypeptide, the second amino acid generally not being Pro.. In terms of biological role, removes 5-oxoproline from various penultimate amino acid residues except L-proline. In Finegoldia magna (strain ATCC 29328 / DSM 20472 / WAL 2508) (Peptostreptococcus magnus), this protein is Pyrrolidone-carboxylate peptidase.